Consider the following 365-residue polypeptide: Histidinol-phosphate aminotransferase (365 aa).

Lys-222 is modified (N6-(pyridoxal phosphate)lysine).

Belongs to the class-II pyridoxal-phosphate-dependent aminotransferase family. Histidinol-phosphate aminotransferase subfamily. Homodimer. Requires pyridoxal 5'-phosphate as cofactor.

The catalysed reaction is L-histidinol phosphate + 2-oxoglutarate = 3-(imidazol-4-yl)-2-oxopropyl phosphate + L-glutamate. It functions in the pathway amino-acid biosynthesis; L-histidine biosynthesis; L-histidine from 5-phospho-alpha-D-ribose 1-diphosphate: step 7/9. The protein is Histidinol-phosphate aminotransferase of Geobacillus sp. (strain WCH70).